Reading from the N-terminus, the 387-residue chain is Putative ribosomal RNA large subunit methyltransferase MJ1649 (387 aa).

Positions 5–81 (LIKLEIDRRA…EEIDYDFFYK (77 aa)) constitute a PUA domain.

Belongs to the methyltransferase superfamily. RlmI family.

The protein localises to the cytoplasm. The chain is Putative ribosomal RNA large subunit methyltransferase MJ1649 from Methanocaldococcus jannaschii (strain ATCC 43067 / DSM 2661 / JAL-1 / JCM 10045 / NBRC 100440) (Methanococcus jannaschii).